The following is a 390-amino-acid chain: Homoserine O-succinyltransferase (390 aa).

In terms of domain architecture, AB hydrolase-1 spans 59-369 (NAVLVCHALN…PHGHDAFLLD (311 aa)). Ser165 functions as the Nucleophile in the catalytic mechanism. Arg235 is a substrate binding site. Catalysis depends on residues Asp330 and His363. Residue Asp364 participates in substrate binding.

It belongs to the AB hydrolase superfamily. MetX family. As to quaternary structure, homodimer.

The protein resides in the cytoplasm. It carries out the reaction L-homoserine + succinyl-CoA = O-succinyl-L-homoserine + CoA. The protein operates within amino-acid biosynthesis; L-methionine biosynthesis via de novo pathway; O-succinyl-L-homoserine from L-homoserine: step 1/1. In terms of biological role, transfers a succinyl group from succinyl-CoA to L-homoserine, forming succinyl-L-homoserine. The protein is Homoserine O-succinyltransferase of Cupriavidus metallidurans (strain ATCC 43123 / DSM 2839 / NBRC 102507 / CH34) (Ralstonia metallidurans).